Here is a 192-residue protein sequence, read N- to C-terminus: Ferritin-like protein (192 aa).

The Fe(3+) site is built by His-44, Glu-48, and His-102. The linker stretch occupies residues 143 to 179; that stretch reads RFDHDYADPHAHHDEHRDHLADMPSAGSSHEEVQPVA. Residues 149–163 are compositionally biased toward basic and acidic residues; it reads ADPHAHHDEHRDHLA. Positions 149-192 are disordered; it reads ADPHAHHDEHRDHLADMPSAGSSHEEVQPVAHKKKGFTVGSLIQ. Residues 180-192 are targeting peptide; that stretch reads HKKKGFTVGSLIQ.

In terms of assembly, homodimer, with 2 Fe atoms bound at the subunit interface (without encapsulin), probably also a dimer when encapsulated. 42 electron-dense accretions can be seen inside the nanocompartment which are probably this cargo protein, although perhaps up to one cargo dimer can be bound per shell protein.

It is found in the encapsulin nanocompartment. It catalyses the reaction 4 Fe(2+) + O2 + 4 H(+) = 4 Fe(3+) + 2 H2O. In terms of biological role, cargo protein of a type 1 encapsulin nanocompartment. A ferritin-like iron-binding protein probably involved in iron mineralization in the encapsulin nanocompartment. Has ferroxidase activity even when encapsulated, the rate is probably controlled by the rate of Fe flux across the nanocompartment pores. Part of the iron-mineralizing encapsulin-associated Firmicute (IMEF) system. 2 different cargo proteins have been identified (IMEF and Fer); when both are expressed in E.coli with the shell protein only IMEF is detected within the nanocompartment. E.coli expressing all 3 genes stores the largest amount of iron and is protected from Fe/H2O2-induced oxidative stress. This Bacillus thermotolerans (Quasibacillus thermotolerans) protein is Ferritin-like protein.